Consider the following 120-residue polypeptide: Immunoglobulin kappa variable 2-24 (120 aa).

Residues 1 to 19 (MRLLAQLLGLLMLWVPGSS) form the signal peptide. The 101-residue stretch at 20–120 (GDIVMTQTPL…YYCMQATQFP (101 aa)) folds into the Ig-like domain. A framework-1 region spans residues 21–43 (DIVMTQTPLSSPVTLGQPASISC). Cysteines 43 and 113 form a disulfide. A complementarity-determining-1 region spans residues 44 to 59 (RSSQSLVHSDGNTYLS). A framework-2 region spans residues 60–74 (WLQQRPGQPPRLLIY). Residues 75–81 (KISNRFS) form a complementarity-determining-2 region. The interval 82-113 (GVPDRFSGSGAGTDFTLKISRVEAEDVGVYYC) is framework-3. A complementarity-determining-3 region spans residues 114-120 (MQATQFP).

Immunoglobulins are composed of two identical heavy chains and two identical light chains; disulfide-linked.

It is found in the secreted. It localises to the cell membrane. V region of the variable domain of immunoglobulin light chains that participates in the antigen recognition. Immunoglobulins, also known as antibodies, are membrane-bound or secreted glycoproteins produced by B lymphocytes. In the recognition phase of humoral immunity, the membrane-bound immunoglobulins serve as receptors which, upon binding of a specific antigen, trigger the clonal expansion and differentiation of B lymphocytes into immunoglobulins-secreting plasma cells. Secreted immunoglobulins mediate the effector phase of humoral immunity, which results in the elimination of bound antigens. The antigen binding site is formed by the variable domain of one heavy chain, together with that of its associated light chain. Thus, each immunoglobulin has two antigen binding sites with remarkable affinity for a particular antigen. The variable domains are assembled by a process called V-(D)-J rearrangement and can then be subjected to somatic hypermutations which, after exposure to antigen and selection, allow affinity maturation for a particular antigen. This chain is Immunoglobulin kappa variable 2-24, found in Homo sapiens (Human).